A 414-amino-acid polypeptide reads, in one-letter code: Autophagy-related protein 18 (414 aa).

WD repeat units follow at residues 1 to 36, 69 to 114, 185 to 225, and 230 to 269; these read MAMNFVTFNQDYSYLAVATSKGFRIFTTDPFAKSYE, KRQS…LLYT, AHRS…KLYQ, and SIPSRIYSMSFNTTSTLLCVSSSTETIHLFKLSHQTSSRE. A L/FRRG motif motif is present at residues 226 to 230; it reads FRRGS. The interval 261-314 is disordered; the sequence is LSHQTSSREGSPSSALSRERAASQSSLGTSPDPDDPTDDMESSEIASRKHNGTL. A compositionally biased stretch (polar residues) spans 262–289; sequence SHQTSSREGSPSSALSRERAASQSSLGT. Acidic residues predominate over residues 292-302; sequence DPDDPTDDMES. 2 WD repeats span residues 309–355 and 367–407; these read KHNG…AWIK and GNAG…GGEG.

This sequence belongs to the WD repeat PROPPIN family. As to quaternary structure, component of the PI(3,5)P2 regulatory complex.

Its subcellular location is the preautophagosomal structure membrane. The protein localises to the vacuole membrane. It is found in the endosome membrane. Functionally, the PI(3,5)P2 regulatory complex regulates both the synthesis and turnover of phosphatidylinositol 3,5-bisphosphate (PtdIns(3,5)P2). Necessary for proper vacuole morphology. Plays an important role in osmotically-induced vacuole fragmentation. Required for cytoplasm to vacuole transport (Cvt) vesicle formation, pexophagy and starvation-induced autophagy. Involved in correct atg9 trafficking to the pre-autophagosomal structure. Might also be involved in premeiotic DNA replication. The polypeptide is Autophagy-related protein 18 (atg18) (Aspergillus terreus (strain NIH 2624 / FGSC A1156)).